The primary structure comprises 615 residues: Zinc finger protein 181 (615 aa).

A KRAB domain is found at 48–120 (VTFSDVAIDF…EKKLSKGLIP (73 aa)). Glycyl lysine isopeptide (Lys-Gly) (interchain with G-Cter in SUMO2) cross-links involve residues K153 and K170. C2H2-type zinc fingers lie at residues 281–303 (YTCS…WRIH), 309–331 (YECR…LISH), 337–359 (YKCI…QSTH), 365–387 (YECM…LRIH), 393–415 (YECR…QKIH), 421–443 (YECR…QRIH), 449–471 (YECN…QSIH), 477–499 (FECQ…LRNH), 505–527 (YECS…HRIH), 533–555 (YECI…QRIH), and 561–583 (YKCN…QRVH).

This sequence belongs to the krueppel C2H2-type zinc-finger protein family.

It localises to the nucleus. May be involved in transcriptional regulation. This Pongo abelii (Sumatran orangutan) protein is Zinc finger protein 181 (ZNF181).